We begin with the raw amino-acid sequence, 449 residues long: Tubulin alpha chain (449 aa).

Glutamine 11 lines the GTP pocket. An N6-acetyllysine modification is found at lysine 40. GTP-binding residues include glutamate 71, serine 140, glycine 144, threonine 145, threonine 179, asparagine 206, and asparagine 228. Residue glutamate 71 participates in Mg(2+) binding. The active site involves glutamate 254.

The protein belongs to the tubulin family. As to quaternary structure, dimer of alpha and beta chains. A typical microtubule is a hollow water-filled tube with an outer diameter of 25 nm and an inner diameter of 15 nM. Alpha-beta heterodimers associate head-to-tail to form protofilaments running lengthwise along the microtubule wall with the beta-tubulin subunit facing the microtubule plus end conferring a structural polarity. Microtubules usually have 13 protofilaments but different protofilament numbers can be found in some organisms and specialized cells. Requires Mg(2+) as cofactor. Undergoes a tyrosination/detyrosination cycle, the cyclic removal and re-addition of a C-terminal tyrosine residue by the enzymes tubulin tyrosine carboxypeptidase (TTCP) and tubulin tyrosine ligase (TTL), respectively. In terms of processing, some glutamate residues at the C-terminus are either polyglutamylated or polyglycylated. These 2 modifications occur exclusively on glutamate residues and result in either polyglutamate or polyglycine chains on the gamma-carboxyl group. Both modifications can coexist on the same protein on adjacent residues, and lowering polyglycylation levels increases polyglutamylation, and reciprocally. The precise function of such modifications is still unclear but they regulate the assembly and dynamics of axonemal microtubules. Post-translationally, acetylation of alpha chains at Lys-40 stabilizes microtubules and affects affinity and processivity of microtubule motors. This modification has a role in multiple cellular functions, ranging from cell motility, cell cycle progression or cell differentiation to intracellular trafficking and signaling.

It is found in the cytoplasm. The protein resides in the cytoskeleton. It carries out the reaction GTP + H2O = GDP + phosphate + H(+). Its function is as follows. Tubulin is the major constituent of microtubules, a cylinder consisting of laterally associated linear protofilaments composed of alpha- and beta-tubulin heterodimers. Microtubules grow by the addition of GTP-tubulin dimers to the microtubule end, where a stabilizing cap forms. Below the cap, tubulin dimers are in GDP-bound state, owing to GTPase activity of alpha-tubulin. In Tetrahymena thermophila, this protein is Tubulin alpha chain.